A 481-amino-acid chain; its full sequence is Threonine synthase (481 aa).

At Lys-118 the chain carries N6-(pyridoxal phosphate)lysine.

The protein belongs to the threonine synthase family. In terms of assembly, monomer. Pyridoxal 5'-phosphate is required as a cofactor.

The catalysed reaction is O-phospho-L-homoserine + H2O = L-threonine + phosphate. It participates in amino-acid biosynthesis; L-threonine biosynthesis; L-threonine from L-aspartate: step 5/5. Its function is as follows. Catalyzes the gamma-elimination of phosphate from L-phosphohomoserine and the beta-addition of water to produce L-threonine. The protein is Threonine synthase (thrC) of Corynebacterium glutamicum (strain ATCC 13032 / DSM 20300 / JCM 1318 / BCRC 11384 / CCUG 27702 / LMG 3730 / NBRC 12168 / NCIMB 10025 / NRRL B-2784 / 534).